The primary structure comprises 267 residues: Hydroxyethylthiazole kinase 2 (267 aa).

Position 41 (Met-41) interacts with substrate. ATP is bound by residues Lys-116 and Thr-166. Position 193 (Gly-193) interacts with substrate.

It belongs to the Thz kinase family. Mg(2+) serves as cofactor.

The enzyme catalyses 5-(2-hydroxyethyl)-4-methylthiazole + ATP = 4-methyl-5-(2-phosphooxyethyl)-thiazole + ADP + H(+). It participates in cofactor biosynthesis; thiamine diphosphate biosynthesis; 4-methyl-5-(2-phosphoethyl)-thiazole from 5-(2-hydroxyethyl)-4-methylthiazole: step 1/1. Functionally, catalyzes the phosphorylation of the hydroxyl group of 4-methyl-5-beta-hydroxyethylthiazole (THZ). In Streptococcus pneumoniae (strain JJA), this protein is Hydroxyethylthiazole kinase 2.